Consider the following 249-residue polypeptide: 1-(5-phosphoribosyl)-5-[(5-phosphoribosylamino)methylideneamino] imidazole-4-carboxamide isomerase (249 aa).

Catalysis depends on aspartate 10, which acts as the Proton acceptor. Aspartate 136 serves as the catalytic Proton donor.

This sequence belongs to the HisA/HisF family.

It localises to the cytoplasm. The enzyme catalyses 1-(5-phospho-beta-D-ribosyl)-5-[(5-phospho-beta-D-ribosylamino)methylideneamino]imidazole-4-carboxamide = 5-[(5-phospho-1-deoxy-D-ribulos-1-ylimino)methylamino]-1-(5-phospho-beta-D-ribosyl)imidazole-4-carboxamide. The protein operates within amino-acid biosynthesis; L-histidine biosynthesis; L-histidine from 5-phospho-alpha-D-ribose 1-diphosphate: step 4/9. This chain is 1-(5-phosphoribosyl)-5-[(5-phosphoribosylamino)methylideneamino] imidazole-4-carboxamide isomerase, found in Symbiobacterium thermophilum (strain DSM 24528 / JCM 14929 / IAM 14863 / T).